The sequence spans 67 residues: Large ribosomal subunit protein bL35 (67 aa).

Belongs to the bacterial ribosomal protein bL35 family.

The protein is Large ribosomal subunit protein bL35 of Leptospira borgpetersenii serovar Hardjo-bovis (strain JB197).